The chain runs to 299 residues: tRNA dimethylallyltransferase (299 aa).

An ATP-binding site is contributed by 10–17; sequence GPTAVGKT. Position 12–17 (12–17) interacts with substrate; the sequence is TAVGKT. Positions 35-38 are interaction with substrate tRNA; sequence DSQQ.

Belongs to the IPP transferase family. Monomer. The cofactor is Mg(2+).

It carries out the reaction adenosine(37) in tRNA + dimethylallyl diphosphate = N(6)-dimethylallyladenosine(37) in tRNA + diphosphate. Functionally, catalyzes the transfer of a dimethylallyl group onto the adenine at position 37 in tRNAs that read codons beginning with uridine, leading to the formation of N6-(dimethylallyl)adenosine (i(6)A). The sequence is that of tRNA dimethylallyltransferase from Streptococcus thermophilus (strain CNRZ 1066).